Consider the following 345-residue polypeptide: Glycosyltransferase 1 domain-containing protein 1 (345 aa).

Residues 1–19 form the signal peptide; the sequence is MKILFLACLRAHTGNSTTA. Residues N246 and N322 are each glycosylated (N-linked (GlcNAc...) asparagine).

This sequence belongs to the glycosyltransferase group 1 family. Glycosyltransferase 4 subfamily.

The protein resides in the secreted. The sequence is that of Glycosyltransferase 1 domain-containing protein 1 (glt1d1) from Xenopus tropicalis (Western clawed frog).